Reading from the N-terminus, the 302-residue chain is Dermonecrotic toxin LiSicTox-alphaIA2bii (302 aa).

A signal peptide spans 1–14; it reads IALILVCWSVLSQA. Positions 15–22 are excised as a propeptide; that stretch reads AQTDVEGR. The active site involves histidine 34. 2 residues coordinate Mg(2+): glutamate 54 and aspartate 56. Histidine 70 acts as the Nucleophile in catalysis. 2 disulfides stabilise this stretch: cysteine 74/cysteine 80 and cysteine 76/cysteine 219. Aspartate 114 is a binding site for Mg(2+). N-linked (GlcNAc...) asparagine glycosylation occurs at asparagine 279.

The protein belongs to the arthropod phospholipase D family. Class II subfamily. Mg(2+) is required as a cofactor. In terms of tissue distribution, expressed by the venom gland.

The protein localises to the secreted. The catalysed reaction is an N-(acyl)-sphingosylphosphocholine = an N-(acyl)-sphingosyl-1,3-cyclic phosphate + choline. The enzyme catalyses an N-(acyl)-sphingosylphosphoethanolamine = an N-(acyl)-sphingosyl-1,3-cyclic phosphate + ethanolamine. It catalyses the reaction a 1-acyl-sn-glycero-3-phosphocholine = a 1-acyl-sn-glycero-2,3-cyclic phosphate + choline. It carries out the reaction a 1-acyl-sn-glycero-3-phosphoethanolamine = a 1-acyl-sn-glycero-2,3-cyclic phosphate + ethanolamine. Dermonecrotic toxins cleave the phosphodiester linkage between the phosphate and headgroup of certain phospholipids (sphingolipid and lysolipid substrates), forming an alcohol (often choline) and a cyclic phosphate. This toxin acts on sphingomyelin (SM). It may also act on ceramide phosphoethanolamine (CPE), lysophosphatidylcholine (LPC) and lysophosphatidylethanolamine (LPE), but not on lysophosphatidylserine (LPS), and lysophosphatidylglycerol (LPG). It acts by transphosphatidylation, releasing exclusively cyclic phosphate products as second products. Induces dermonecrosis, hemolysis, increased vascular permeability, edema, inflammatory response, and platelet aggregation. This Loxosceles intermedia (Brown spider) protein is Dermonecrotic toxin LiSicTox-alphaIA2bii.